A 233-amino-acid chain; its full sequence is Maternal B9.15 protein (233 aa).

The interval 135-165 (KATSDYHSGTSSDEEPTNKEPKTIPKVSNPN) is disordered.

Belongs to the BTG family.

The protein is Maternal B9.15 protein of Xenopus laevis (African clawed frog).